Consider the following 164-residue polypeptide: Large ribosomal subunit protein bL17 (164 aa).

Positions 127–164 (RARTDSVPARKGAGKKDASRVSGTVPDGQSQKIGKKKE) are disordered.

This sequence belongs to the bacterial ribosomal protein bL17 family. Part of the 50S ribosomal subunit. Contacts protein L32.

The chain is Large ribosomal subunit protein bL17 from Treponema pallidum (strain Nichols).